We begin with the raw amino-acid sequence, 90 residues long: Large ribosomal subunit protein bL27 (90 aa).

The tract at residues 1-20 (MAHKKAGGSSRNGRDSAGKR) is disordered.

The protein belongs to the bacterial ribosomal protein bL27 family.

This Nitrobacter hamburgensis (strain DSM 10229 / NCIMB 13809 / X14) protein is Large ribosomal subunit protein bL27.